A 134-amino-acid polypeptide reads, in one-letter code: D-ribose pyranase (134 aa).

His-20 (proton donor) is an active-site residue. Residues Asp-28, His-99, and 123 to 125 (YSN) contribute to the substrate site.

This sequence belongs to the RbsD / FucU family. RbsD subfamily. Homodecamer.

It is found in the cytoplasm. The enzyme catalyses beta-D-ribopyranose = beta-D-ribofuranose. The protein operates within carbohydrate metabolism; D-ribose degradation; D-ribose 5-phosphate from beta-D-ribopyranose: step 1/2. Catalyzes the interconversion of beta-pyran and beta-furan forms of D-ribose. This chain is D-ribose pyranase, found in Staphylococcus aureus (strain USA300).